The chain runs to 576 residues: Protein O-linked-mannose beta-1,4-N-acetylglucosaminyltransferase 2 (576 aa).

Over 1 to 4 (MNIS) the chain is Cytoplasmic. Residues 5 to 25 (AVFNALLVSIMAAVLWKHVKL) traverse the membrane as a helical; Signal-anchor for type II membrane protein segment. Residues 26-576 (LEQFYVIEEE…PFAEVLVCNT (551 aa)) are Lumenal-facing. N98, N275, N335, N451, N539, and N561 each carry an N-linked (GlcNAc...) asparagine glycan. A Fibronectin type-III domain is found at 482-576 (RESKCQASAQ…PFAEVLVCNT (95 aa)).

Belongs to the glycosyltransferase 61 family.

It localises to the endoplasmic reticulum membrane. It catalyses the reaction 3-O-(alpha-D-mannosyl)-L-threonyl-[protein] + UDP-N-acetyl-alpha-D-glucosamine = 3-O-(N-acetyl-beta-D-glucosaminyl-(1-&gt;4)-alpha-D-mannosyl)-L-threonyl-[protein] + UDP + H(+). Its pathway is protein modification; protein glycosylation. In terms of biological role, O-linked mannose beta-1,4-N-acetylglucosaminyltransferase that transfers UDP-N-acetyl-D-glucosamine to the 4-position of the mannose to generate N-acetyl-D-glucosamine-beta-1,4-O-D-mannosylprotein. Involved in the biosynthesis of the phosphorylated O-mannosyl trisaccharide (N-acetylgalactosamine-beta-3-N-acetylglucosamine-beta-4-(phosphate-6-)mannose), a carbohydrate structure present in alpha-dystroglycan (DAG1), which is required for binding laminin G-like domain-containing extracellular proteins with high affinity. The polypeptide is Protein O-linked-mannose beta-1,4-N-acetylglucosaminyltransferase 2 (pomgnt2) (Xenopus tropicalis (Western clawed frog)).